Consider the following 334-residue polypeptide: DNA-directed RNA polymerase subunit alpha (334 aa).

The interval 1–232 is alpha N-terminal domain (alpha-NTD); it reads MIREKLKVST…DLFIPFLHAE (232 aa). An alpha C-terminal domain (alpha-CTD) region spans residues 267-334; it reads QKEITLKSIF…NILQIENHFV (68 aa).

It belongs to the RNA polymerase alpha chain family. In terms of assembly, in plastids the minimal PEP RNA polymerase catalytic core is composed of four subunits: alpha, beta, beta', and beta''. When a (nuclear-encoded) sigma factor is associated with the core the holoenzyme is formed, which can initiate transcription.

It localises to the plastid. Its subcellular location is the chloroplast. The catalysed reaction is RNA(n) + a ribonucleoside 5'-triphosphate = RNA(n+1) + diphosphate. Its function is as follows. DNA-dependent RNA polymerase catalyzes the transcription of DNA into RNA using the four ribonucleoside triphosphates as substrates. This is DNA-directed RNA polymerase subunit alpha from Pisum sativum (Garden pea).